The primary structure comprises 445 residues: UDP-N-acetylglucosamine--peptide N-acetylglucosaminyltransferase stabilizing protein GtfB (445 aa).

The glycosyltransferase 1 stretch occupies residues 55–171 (KPLYFNQVPV…TLPGQSMRYF (117 aa)).

Belongs to the GtfB family. Interacts with glycosyltransferase GtfA; probably forms a heterotetramer with 2 subunits each of GtfA and GtfB. Part of the accessory SecA2/SecY2 protein translocation apparatus.

Its subcellular location is the cell membrane. It functions in the pathway protein modification; protein glycosylation. Functionally, required for the polymorphic O-glycosylation of the serine-rich repeat protein PsrP. A stabilizing protein that is part of the accessory SecA2/SecY2 system specifically required to export serine-rich repeat cell wall proteins encoded upstream in the same operon. The GtfA-GtfB complex adds GlcNAc from UDP-GlcNAc to PsrP, attaching the first sugar residue. Stabilizes the glycosylation activity of GtfA. Has no N-acetylglucosaminyl transferase activity on its own. The chain is UDP-N-acetylglucosamine--peptide N-acetylglucosaminyltransferase stabilizing protein GtfB from Streptococcus pneumoniae serotype 4 (strain ATCC BAA-334 / TIGR4).